We begin with the raw amino-acid sequence, 302 residues long: Sulfate adenylyltransferase subunit 2 (302 aa).

A disordered region spans residues 280-302; the sequence is RQGRAIDHDQSGSMELKKRQGYF.

It belongs to the PAPS reductase family. CysD subfamily. As to quaternary structure, heterodimer composed of CysD, the smaller subunit, and CysN.

The enzyme catalyses sulfate + ATP + H(+) = adenosine 5'-phosphosulfate + diphosphate. The protein operates within sulfur metabolism; hydrogen sulfide biosynthesis; sulfite from sulfate: step 1/3. Functionally, with CysN forms the ATP sulfurylase (ATPS) that catalyzes the adenylation of sulfate producing adenosine 5'-phosphosulfate (APS) and diphosphate, the first enzymatic step in sulfur assimilation pathway. APS synthesis involves the formation of a high-energy phosphoric-sulfuric acid anhydride bond driven by GTP hydrolysis by CysN coupled to ATP hydrolysis by CysD. The protein is Sulfate adenylyltransferase subunit 2 of Vibrio vulnificus (strain CMCP6).